Reading from the N-terminus, the 449-residue chain is C4-dicarboxylate transport protein (449 aa).

Transmembrane regions (helical) follow at residues 18–38, 61–81, 93–113, 159–179, 202–222, 244–264, 346–366, and 369–389; these read PFYLQLYFWVIIAIILGALLG, MIISPVIFLTIVTGIASVAHV, VYFLFFSTLALLLGLVVAHVV, FVGDNILQVLFVAVLFGIALA, LVQMLMKMAPIGAFGAIAFTI, SLLFVLVILGAVSWLCGFSIL, LFLVAMLSSKGAAGVSGAGFI, and AATLAVVPEVPIAGMALILGV.

The protein belongs to the dicarboxylate/amino acid:cation symporter (DAACS) (TC 2.A.23) family.

It localises to the cell inner membrane. In terms of biological role, responsible for the transport of dicarboxylates such as succinate, fumarate, and malate from the periplasm across the membrane. This is C4-dicarboxylate transport protein from Xylella fastidiosa (strain M23).